We begin with the raw amino-acid sequence, 268 residues long: Glucosamine-6-phosphate deaminase (268 aa).

Asp-67 serves as the catalytic Proton acceptor; for enolization step. Asn-137 acts as the For ring-opening step in catalysis. His-139 acts as the Proton acceptor; for ring-opening step in catalysis. The active-site For ring-opening step is the Glu-144.

Belongs to the glucosamine/galactosamine-6-phosphate isomerase family. NagB subfamily. In terms of assembly, homohexamer.

It catalyses the reaction alpha-D-glucosamine 6-phosphate + H2O = beta-D-fructose 6-phosphate + NH4(+). The protein operates within amino-sugar metabolism; N-acetylneuraminate degradation; D-fructose 6-phosphate from N-acetylneuraminate: step 5/5. Functionally, catalyzes the reversible isomerization-deamination of glucosamine 6-phosphate (GlcN6P) to form fructose 6-phosphate (Fru6P) and ammonium ion. The chain is Glucosamine-6-phosphate deaminase from Colwellia psychrerythraea (strain 34H / ATCC BAA-681) (Vibrio psychroerythus).